Here is a 133-residue protein sequence, read N- to C-terminus: MLVAQQLGQWAEQTALKLLKEQNYEWVASNYHSRRGEVDLIVKRGNELIFVEVKARGQGNYGQACEMVTLSKQKKIIKTAMRFLQRYPSYQDFYCRFDVICFDFPQKIAKTVQQDFSKFHYDLQWIENAFTLD.

It belongs to the UPF0102 family.

In Acinetobacter baumannii (strain AB0057), this protein is UPF0102 protein AB57_1130.